Consider the following 619-residue polypeptide: Dihydroxy-acid dehydratase (619 aa).

Aspartate 81 lines the Mg(2+) pocket. A [2Fe-2S] cluster-binding site is contributed by cysteine 122. Mg(2+) contacts are provided by aspartate 123 and lysine 124. Residue lysine 124 is modified to N6-carboxylysine. Cysteine 195 contacts [2Fe-2S] cluster. Residue glutamate 494 coordinates Mg(2+). Serine 520 (proton acceptor) is an active-site residue.

Belongs to the IlvD/Edd family. In terms of assembly, homodimer. The cofactor is [2Fe-2S] cluster. Requires Mg(2+) as cofactor.

It carries out the reaction (2R)-2,3-dihydroxy-3-methylbutanoate = 3-methyl-2-oxobutanoate + H2O. The enzyme catalyses (2R,3R)-2,3-dihydroxy-3-methylpentanoate = (S)-3-methyl-2-oxopentanoate + H2O. It functions in the pathway amino-acid biosynthesis; L-isoleucine biosynthesis; L-isoleucine from 2-oxobutanoate: step 3/4. Its pathway is amino-acid biosynthesis; L-valine biosynthesis; L-valine from pyruvate: step 3/4. Its function is as follows. Functions in the biosynthesis of branched-chain amino acids. Catalyzes the dehydration of (2R,3R)-2,3-dihydroxy-3-methylpentanoate (2,3-dihydroxy-3-methylvalerate) into 2-oxo-3-methylpentanoate (2-oxo-3-methylvalerate) and of (2R)-2,3-dihydroxy-3-methylbutanoate (2,3-dihydroxyisovalerate) into 2-oxo-3-methylbutanoate (2-oxoisovalerate), the penultimate precursor to L-isoleucine and L-valine, respectively. This Shewanella frigidimarina (strain NCIMB 400) protein is Dihydroxy-acid dehydratase.